Here is a 156-residue protein sequence, read N- to C-terminus: Putative F-box protein R637 (156 aa).

The F-box domain occupies 4-51 (HISSLLNEDCVRHIMCFLTDKEKGKFCLTCRDLLYLIKDVKFNDPVNK).

The sequence is that of Putative F-box protein R637 from Acanthamoeba polyphaga mimivirus (APMV).